We begin with the raw amino-acid sequence, 361 residues long: Septin-2 (361 aa).

Tyrosine 17 carries the phosphotyrosine modification. The region spanning 34–306 (KGFEFTLMVV…ENFRSERLKR (273 aa)) is the Septin-type G domain. Residues 44–51 (GESGLGKS) are G1 motif. Residues 44 to 51 (GESGLGKS), threonine 78, glycine 104, and 183 to 191 (KADTLTLKE) each bind GTP. Residues 101–104 (DTPG) form a G3 motif region. Residues 182–185 (AKAD) are G4 motif. Residue lysine 190 is modified to N6-acetyllysine. Phosphotyrosine is present on tyrosine 211. Position 218 is a phosphoserine (serine 218). GTP is bound by residues glycine 241 and arginine 256. Positions 260-270 (WGVVEVENPEH) are important for dimerization.

This sequence belongs to the TRAFAC class TrmE-Era-EngA-EngB-Septin-like GTPase superfamily. Septin GTPase family. Septins polymerize into heterooligomeric protein complexes that form filaments, and associate with cellular membranes, actin filaments and microtubules. GTPase activity is required for filament formation. Septin filaments are assembled from asymmetrical heterotrimers, composed of SEPTIN2, SEPTIN6 and SEPTIN7 that associate head-to-head to form a hexameric unit. Interaction between SEPTIN2 and SEPTIN7 seems indirect. Also interacts with SEPTIN9 and SEPTIN5. Interaction with SEPTIN4 not detected. Component of a septin core octameric complex consisting of SEPTIN12, SEPTIN7, SEPTIN6 and SEPTIN2 or SEPTIN4 in the order 12-7-6-2-2-6-7-12 or 12-7-6-4-4-6-7-12 and located in the sperm annulus. Interacts with MAP4. Interacts with DZIP1L.

The protein resides in the cytoplasm. It localises to the cytoskeleton. It is found in the spindle. Its subcellular location is the cleavage furrow. The protein localises to the midbody. The protein resides in the cell cortex. It localises to the cell projection. It is found in the cilium membrane. Its subcellular location is the cilium. The protein localises to the flagellum. Functionally, filament-forming cytoskeletal GTPase. Forms a filamentous structure with SEPTIN12, SEPTIN6, SEPTIN2 and probably SEPTIN4 at the sperm annulus which is required for the structural integrity and motility of the sperm tail during postmeiotic differentiation. Required for normal organization of the actin cytoskeleton. Plays a role in the biogenesis of polarized columnar-shaped epithelium by maintaining polyglutamylated microtubules, thus facilitating efficient vesicle transport, and by impeding MAP4 binding to tubulin. Required for the progression through mitosis. Forms a scaffold at the midplane of the mitotic splindle required to maintain CENPE localization at kinetochores and consequently chromosome congression. During anaphase, may be required for chromosome segregation and spindle elongation. Plays a role in ciliogenesis and collective cell movements. In cilia, required for the integrity of the diffusion barrier at the base of the primary cilium that prevents diffusion of transmembrane proteins between the cilia and plasma membranes: probably acts by regulating the assembly of the tectonic-like complex (also named B9 complex) by localizing TMEM231 protein. This is Septin-2 from Rattus norvegicus (Rat).